Consider the following 270-residue polypeptide: Cyclase-like protein 3 (270 aa).

The N-terminal stretch at 1 to 23 (MMAHLAPLFLLLLLLLLPLHAAA) is a signal peptide.

The protein belongs to the Cyclase 1 superfamily. Highly expressed in leaf sheaths. leaf collars and flag leaves. Expressed in roots, stems, glumes, young panicles and pistils.

Its subcellular location is the secreted. The protein localises to the extracellular space. The protein resides in the extracellular matrix. May be involved in response to stresses. The chain is Cyclase-like protein 3 from Oryza sativa subsp. japonica (Rice).